The chain runs to 476 residues: Glycogen synthase (476 aa).

Lys-15 is an ADP-alpha-D-glucose binding site.

It belongs to the glycosyltransferase 1 family. Bacterial/plant glycogen synthase subfamily.

It carries out the reaction [(1-&gt;4)-alpha-D-glucosyl](n) + ADP-alpha-D-glucose = [(1-&gt;4)-alpha-D-glucosyl](n+1) + ADP + H(+). It functions in the pathway glycan biosynthesis; glycogen biosynthesis. Functionally, synthesizes alpha-1,4-glucan chains using ADP-glucose. The sequence is that of Glycogen synthase from Haemophilus influenzae (strain PittEE).